A 166-amino-acid chain; its full sequence is Endoribonuclease YbeY (166 aa).

Zn(2+) contacts are provided by histidine 111, histidine 115, and histidine 121. The segment at 141-166 (LGYPDPYAEDESADHPHSDTPSKDHE) is disordered. A compositionally biased stretch (basic and acidic residues) spans 153–166 (ADHPHSDTPSKDHE).

The protein belongs to the endoribonuclease YbeY family. It depends on Zn(2+) as a cofactor.

Its subcellular location is the cytoplasm. In terms of biological role, single strand-specific metallo-endoribonuclease involved in late-stage 70S ribosome quality control and in maturation of the 3' terminus of the 16S rRNA. The sequence is that of Endoribonuclease YbeY from Pseudomonas savastanoi pv. phaseolicola (strain 1448A / Race 6) (Pseudomonas syringae pv. phaseolicola (strain 1448A / Race 6)).